A 517-amino-acid polypeptide reads, in one-letter code: Bifunctional purine biosynthesis protein PurH (517 aa).

The region spanning methionine 1–valine 145 is the MGS-like domain.

It belongs to the PurH family.

The catalysed reaction is (6R)-10-formyltetrahydrofolate + 5-amino-1-(5-phospho-beta-D-ribosyl)imidazole-4-carboxamide = 5-formamido-1-(5-phospho-D-ribosyl)imidazole-4-carboxamide + (6S)-5,6,7,8-tetrahydrofolate. The enzyme catalyses IMP + H2O = 5-formamido-1-(5-phospho-D-ribosyl)imidazole-4-carboxamide. It participates in purine metabolism; IMP biosynthesis via de novo pathway; 5-formamido-1-(5-phospho-D-ribosyl)imidazole-4-carboxamide from 5-amino-1-(5-phospho-D-ribosyl)imidazole-4-carboxamide (10-formyl THF route): step 1/1. It functions in the pathway purine metabolism; IMP biosynthesis via de novo pathway; IMP from 5-formamido-1-(5-phospho-D-ribosyl)imidazole-4-carboxamide: step 1/1. The polypeptide is Bifunctional purine biosynthesis protein PurH (Prochlorococcus marinus (strain MIT 9312)).